Consider the following 291-residue polypeptide: Glucose and ribitol dehydrogenase (291 aa).

The disordered stretch occupies residues 1–35 (MASGGQFPPQKQESQPGKEHLMDPSPQHASPHYKP). 45–69 (LVTGGDSGIGRSVCYHFALEGATVA) is a binding site for NAD(+). Position 183 (Ser183) interacts with substrate. Tyr196 functions as the Proton acceptor in the catalytic mechanism.

Belongs to the short-chain dehydrogenases/reductases (SDR) family. As to expression, expressed in embryogenic cells, somatic embryos and seeds in the later stages of development, but not in non-embryogenic cells and mature leaves.

Its function is as follows. May act as a short alcohol-polyol-sugar dehydrogenase possibly related to carbohydrate metabolism and the acquisition of desiccation tolerance. May also be involved in signal transduction. The protein is Glucose and ribitol dehydrogenase (CAISE5) of Daucus carota (Wild carrot).